The following is a 347-amino-acid chain: Ataxin-7-like protein 3 (347 aa).

The SGF11-type zinc-finger motif lies at 84–105; the sequence is CVCPNCSRSIAASRFAPHLEKC. Residues 116–125 are compositionally biased toward low complexity; it reads ANRRIANSNN. The tract at residues 116-184 is disordered; the sequence is ANRRIANSNN…GELSNSDPFK (69 aa). Phosphoserine occurs at positions 129 and 131. Residues 132 to 141 are compositionally biased toward acidic residues; that stretch reads DQEDNDDIND. The SCA7 domain occupies 196 to 263; the sequence is LGPEELRSLL…SLDNDSFDMT (68 aa). The span at 275–288 shows a compositional bias: low complexity; sequence DGSSDLSPSDSGSS. The segment at 275 to 347 is disordered; it reads DGSSDLSPSD…PTPSIYDDIN (73 aa). Residues Ser-278, Ser-281, and Ser-326 each carry the phosphoserine modification.

The protein belongs to the SGF11 family. As to quaternary structure, component of some SAGA transcription coactivator-HAT complexes, at least composed of ATXN7, ATXN7L3, ENY2, GCN5L2, SUPT3H, TAF10, TRRAP and USP22. Within the SAGA complex, ENY2, ATXN7, ATXN7L3, and USP22 form an additional subcomplex of SAGA called the DUB module (deubiquitination module). Interacts directly with ENY2 and USP22.

The protein localises to the nucleus. Its function is as follows. Component of the transcription regulatory histone acetylation (HAT) complex SAGA, a multiprotein complex that activates transcription by remodeling chromatin and mediating histone acetylation and deubiquitination. Within the SAGA complex, participates in a subcomplex that specifically deubiquitinates both histones H2A and H2B. The SAGA complex is recruited to specific gene promoters by activators such as MYC, where it is required for transcription. Required for nuclear receptor-mediated transactivation. Within the complex, it is required to recruit USP22 and ENY2 into the SAGA complex. Regulates H2B monoubiquitination (H2Bub1) levels. Affects subcellular distribution of ENY2, USP22 and ATXN7L3B. In Homo sapiens (Human), this protein is Ataxin-7-like protein 3.